Consider the following 122-residue polypeptide: Large ribosomal subunit protein uL22 (122 aa).

The disordered stretch occupies residues 102–122 (VAEGKEMKSSKSHKKNQAEGK).

Belongs to the universal ribosomal protein uL22 family. Part of the 50S ribosomal subunit.

This protein binds specifically to 23S rRNA; its binding is stimulated by other ribosomal proteins, e.g. L4, L17, and L20. It is important during the early stages of 50S assembly. It makes multiple contacts with different domains of the 23S rRNA in the assembled 50S subunit and ribosome. Functionally, the globular domain of the protein is located near the polypeptide exit tunnel on the outside of the subunit, while an extended beta-hairpin is found that lines the wall of the exit tunnel in the center of the 70S ribosome. This Helicobacter pylori (strain G27) protein is Large ribosomal subunit protein uL22.